Consider the following 213-residue polypeptide: Peptide methionine sulfoxide reductase MsrA (213 aa).

Cysteine 52 is an active-site residue.

This sequence belongs to the MsrA Met sulfoxide reductase family.

The catalysed reaction is L-methionyl-[protein] + [thioredoxin]-disulfide + H2O = L-methionyl-(S)-S-oxide-[protein] + [thioredoxin]-dithiol. It carries out the reaction [thioredoxin]-disulfide + L-methionine + H2O = L-methionine (S)-S-oxide + [thioredoxin]-dithiol. Has an important function as a repair enzyme for proteins that have been inactivated by oxidation. Catalyzes the reversible oxidation-reduction of methionine sulfoxide in proteins to methionine. This chain is Peptide methionine sulfoxide reductase MsrA, found in Enterobacter sp. (strain 638).